Here is a 138-residue protein sequence, read N- to C-terminus: Large ribosomal subunit protein bL19 (138 aa).

Belongs to the bacterial ribosomal protein bL19 family.

In terms of biological role, this protein is located at the 30S-50S ribosomal subunit interface and may play a role in the structure and function of the aminoacyl-tRNA binding site. The sequence is that of Large ribosomal subunit protein bL19 from Rickettsia conorii (strain ATCC VR-613 / Malish 7).